A 302-amino-acid polypeptide reads, in one-letter code: Alpha-N-acetyl-neuraminyl-2,3-beta-galactosyl-1,3-N-acetyl-galactosaminide alpha-2,6-sialyltransferase (302 aa).

Residues 1 to 6 (MKAPGR) lie on the Cytoplasmic side of the membrane. Residues 7–27 (LVLIILCSVVFSAVYILLCCW) form a helical; Signal-anchor for type II membrane protein membrane-spanning segment. Residues 28 to 302 (AGLPLCLATC…VFAHPSWRTE (275 aa)) are Lumenal-facing. An intrachain disulfide couples cysteine 76 to cysteine 225. Asparagine 135 carries an N-linked (GlcNAc...) asparagine glycan.

It belongs to the glycosyltransferase 29 family. Ubiquitous.

It localises to the golgi apparatus membrane. The catalysed reaction is an alpha-Neu5Ac-(2-&gt;3)-beta-D-Gal-(1-&gt;3)-D-GlcNAc derivative + CMP-N-acetyl-beta-neuraminate = an alpha-Neu5Ac-(2-&gt;3)-beta-D-Gal-(1-&gt;3)-[alpha-Neu5Ac-(2-&gt;6)]-D-GlcNAc derivative + CMP + H(+). It catalyses the reaction N-acetyl-alpha-neuraminosyl-(2-&gt;3)-beta-D-galactosyl-(1-&gt;3)-N-acetyl-D-galactosamine + CMP-N-acetyl-beta-neuraminate = N-acetyl-alpha-neuraminosyl-(2-&gt;3)-beta-D-galactosyl-(1-&gt;3)-[N-acetyl-alpha-neuraminosyl-(2-&gt;6)]-N-acetyl-D-galactosamine + CMP + H(+). The enzyme catalyses a ganglioside GM1b (d18:1(4E)) + CMP-N-acetyl-beta-neuraminate = a ganglioside GD1alpha (d18:1(4E)) + CMP + H(+). It carries out the reaction 3-O-[alpha-Neu5Ac-(2-&gt;3)-beta-D-Gal-(1-&gt;3)-alpha-D-GalNAc]-L-Ser-[protein] + CMP-N-acetyl-beta-neuraminate = a 3-O-{alpha-Neu5Ac-(2-&gt;3)-beta-D-Gal-(1-&gt;3)-[alpha-Neu5Ac-(2-&gt;6)]-alpha-D-GalNAc}-L-seryl-[protein] + CMP + H(+). The catalysed reaction is 3-O-[alpha-Neu5Ac-(2-&gt;3)-beta-D-Gal-(1-&gt;3)-alpha-D-GalNAc]-L-Thr-[protein] + CMP-N-acetyl-beta-neuraminate = a 3-O-{alpha-Neu5Ac-(2-&gt;3)-beta-D-Gal-(1-&gt;3)-[alpha-Neu5Ac-(2-&gt;6)]-alpha-D-GalNAc}-L-threonyl-[protein] + CMP + H(+). Its pathway is protein modification; protein glycosylation. The protein operates within glycolipid biosynthesis. In terms of biological role, transfers the sialyl group (N-acetyl-alpha-neuraminyl or NeuAc) from CMP-NeuAc to the GalNAc residue on the NeuAc-alpha-2,3-Gal-beta-1,3-GalNAc sequence of glycoproteins and glycolipids forming an alpha-2,6-linkage. Produces branched type disialyl structures by transfer of a sialyl group onto a GalNAc residue inside the backbone core chains. Prefers O-glycans to glycoproteins or glycolipids. This chain is Alpha-N-acetyl-neuraminyl-2,3-beta-galactosyl-1,3-N-acetyl-galactosaminide alpha-2,6-sialyltransferase (ST6GALNAC4), found in Homo sapiens (Human).